We begin with the raw amino-acid sequence, 652 residues long: UvrABC system protein C (652 aa).

The region spanning 20–99 (PEPGCYLMRD…IKNHQPHFNV (80 aa)) is the GIY-YIG domain. The UVR domain occupies 209-244 (DELQRLLDEQMNRYAERLDFESAARVRDQLQGLDQL).

Belongs to the UvrC family. In terms of assembly, interacts with UvrB in an incision complex.

Its subcellular location is the cytoplasm. In terms of biological role, the UvrABC repair system catalyzes the recognition and processing of DNA lesions. UvrC both incises the 5' and 3' sides of the lesion. The N-terminal half is responsible for the 3' incision and the C-terminal half is responsible for the 5' incision. The protein is UvrABC system protein C of Parasynechococcus marenigrum (strain WH8102).